Here is a 926-residue protein sequence, read N- to C-terminus: DNA mismatch repair protein MutS (926 aa).

Positions 1-60 are disordered; sequence MAASQNPIQGSLFGGNEESDLNKAEKLKGSERSNVNLSHQQLKEDASLRPRIKQTPKNPN. Residues 20 to 31 are compositionally biased toward basic and acidic residues; the sequence is DLNKAEKLKGSE. 726–733 contributes to the ATP binding site; sequence GPNASGKS.

It belongs to the DNA mismatch repair MutS family.

In terms of biological role, this protein is involved in the repair of mismatches in DNA. It is possible that it carries out the mismatch recognition step. This protein has a weak ATPase activity. The chain is DNA mismatch repair protein MutS from Prochlorococcus marinus (strain NATL2A).